The primary structure comprises 555 residues: uncharacterized protein (555 aa).

At 1–83 the chain is on the extracellular side; it reads MSNEDETTRL…GRRKLLCLYG (83 aa). The helical transmembrane segment at 84-104 threads the bilayer; it reads LVMIICIAESISMTATIPLVM. Residues 105 to 125 lie on the Cytoplasmic side of the membrane; the sequence is DKVAEGISDENGHYDSVAVQT. A helical membrane pass occupies residues 126–146; the sequence is IVSSISSSTMMIAGAISIFMA. Residues 147 to 188 lie on the Extracellular side of the membrane; the sequence is GKWGELSDRIGRVRVFKYMSGIRVIGLLTHVFTLSSKMKYHK. The chain crosses the membrane as a helical span at residues 189-209; it reads WAIVLTACIVPSFGGLFALVA. The Cytoplasmic portion of the chain corresponds to 210–229; that stretch reads NGNSYVSDIVKTEHRMVTIG. The chain crosses the membrane as a helical span at residues 230-250; it reads IMMSCIYATMGVGPMFGSFLV. Residues 251 to 257 lie on the Extracellular side of the membrane; it reads KWTHGNG. Residues 258-278 form a helical membrane-spanning segment; it reads FIPIYTSIAFVILALIICETI. Residues 279 to 356 are Cytoplasmic-facing; that stretch reads MVEPRHETQM…LVPRHTVILL (78 aa). The segment at 289–311 is disordered; that stretch reads AHSQSTYTKRREKLRSQSGSDDA. A helical membrane pass occupies residues 357 to 377; the sequence is IVLDILFVCGTTSCMPALILF. The Extracellular portion of the chain corresponds to 378–386; sequence STYEYKWHA. The chain crosses the membrane as a helical span at residues 387–407; sequence VELGYFISILGIGRGVVLLVV. Topologically, residues 408–428 are cytoplasmic; it reads SPTLLYTLKRIYQHLNHSIDK. The helical transmembrane segment at 429–449 threads the bilayer; it reads IDIFCIQFSMIVITLSLFVMI. Over 450–459 the chain is Extracellular; sequence RFGEKTPTSM. The helical transmembrane segment at 460 to 480 threads the bilayer; the sequence is IIFALLQALSAFCSPTLQSGI. Residues 481–491 lie on the Cytoplasmic side of the membrane; that stretch reads IKYTSKKHTGE. The chain crosses the membrane as a helical span at residues 492 to 512; sequence MFGAMALVRSCVMLVIPPILL. The Extracellular portion of the chain corresponds to 513–523; it reads KLYGSTVSVNP. Residues 524-544 form a helical membrane-spanning segment; sequence SLFMYIPFSTSIVAILLTFFL. Residues 545–555 are Cytoplasmic-facing; the sequence is RIYKNPPLDGP.

It is found in the membrane. This is an uncharacterized protein from Saccharomyces cerevisiae (strain ATCC 204508 / S288c) (Baker's yeast).